The primary structure comprises 484 residues: Tubulin-like protein TubZ (484 aa).

Residue glutamine 32–lysine 33 coordinates GTP. Aspartate 64 is a binding site for Mg(2+). GTP-binding positions include glycine 140–glycine 142, asparagine 213, lysine 237, and asparagine 241. The interval arginine 408–arginine 484 is required to bind TubR-DNA complex. Residues threonine 428–arginine 484 are disordered. Over residues phenylalanine 452–arginine 484 the composition is skewed to polar residues.

Belongs to the FtsZ family. TubZ subfamily. Forms filaments; a 2-stranded filament forms with the non-hydrolyzable GTP-gamma-S which is probably a precursor to the 4-stranded filament that forms in the presence of GTP. The 4-stranded form binds GDP. In vivo polymerizes to form dynamic filaments that often extend from one cell pole to the other, moving in a unidirectional manner. Filaments polymerize at the plus end and depolymerize at the minus end, a process called treadmilling. Polymerization only occurs above a critical concentration, it does not require upstream tubR. The tubC DNA-TubR complex binds to TubZ. Mg(2+) serves as cofactor.

The protein localises to the cytoplasm. It carries out the reaction GTP + H2O = GDP + phosphate + H(+). With respect to regulation, GTPase is inhibited by GTP-gamma-S, which also stabilizes filaments. A tubulin-like, filament forming GTPase; the motor component of the type III plasmid partition system which ensures correct segregation of the pBtoxis plasmid. Filaments may seed from the centromere-like site (tubC) when bound by DNA-binding protein TubR; the tubC-TubR complex stabilizes the TubZ filament. Filaments grow at the plus end and depolymerize at the minus end, a process called treadmilling. TubR-tubC complexes track the depolymerizing minus end of the filament, probably pulling plasmid within the cell. Required for pBtoxis plasmid replication/partition. Binds the TubR-tubC complex; GTP is not required for binding to TubR-tubC. TubZ alone does not bind DNA. Has a high GTPase activity in the presence of Mg(2+); in the presence of GTP assembles into dynamic filaments which upon polymerization bind almost exclusively GDP. Filament formation is cooperative, requiring a critical concentration. Formation occurs very quickly and is followed by disassembly as GTP is consumed. The polypeptide is Tubulin-like protein TubZ (Bacillus thuringiensis subsp. israelensis).